The sequence spans 691 residues: Serotransferrin-2 (691 aa).

The N-terminal stretch at 1–18 (MKLLLLSALLGCLATAYA) is a signal peptide. Transferrin-like domains follow at residues 25-329 (VKWC…SLKK) and 340-670 (IKWC…SLRK). Cysteines 28 and 50 form a disulfide. Fe(3+) contacts are provided by Asp-74 and Tyr-104. Intrachain disulfides connect Cys-127–Cys-207, Cys-172–Cys-186, and Cys-235–Cys-249. Hydrogencarbonate contacts are provided by Thr-129, Ser-134, Gly-136, and Trp-137. N-linked (GlcNAc...) asparagine glycosylation occurs at Asn-169. Tyr-201 is a binding site for Fe(3+). Residue His-257 participates in Fe(3+) binding. Cystine bridges form between Cys-343-Cys-379 and Cys-353-Cys-370. Fe(3+) contacts are provided by Asp-394 and Tyr-428. 7 disulfide bridges follow: Cys-404–Cys-682, Cys-419–Cys-643, Cys-451–Cys-530, Cys-475–Cys-671, Cys-485–Cys-499, Cys-496–Cys-513, and Cys-570–Cys-584. Residues Thr-453, Arg-457, Ala-459, and Gly-460 each coordinate hydrogencarbonate. Tyr-524 is a binding site for Fe(3+). His-592 is a binding site for Fe(3+).

Belongs to the transferrin family. As to quaternary structure, monomer. Abundant in liver and serum with smaller amounts found in the stomach and kidney.

The protein resides in the secreted. Transferrins are iron binding transport proteins which can bind two Fe(3+) ions in association with the binding of an anion, usually bicarbonate. It is responsible for the transport of iron from sites of absorption and heme degradation to those of storage and utilization. Serum transferrin may also have a further role in stimulating cell proliferation. The sequence is that of Serotransferrin-2 (tf2) from Salmo salar (Atlantic salmon).